Reading from the N-terminus, the 397-residue chain is Alanine racemase, biosynthetic (397 aa).

Lys-42 serves as the catalytic Proton acceptor; specific for D-alanine. N6-(pyridoxal phosphate)lysine is present on Lys-42. Arg-136 provides a ligand contact to substrate. Catalysis depends on Tyr-257, which acts as the Proton acceptor; specific for L-alanine. Met-305 serves as a coordination point for substrate. Positions 373–397 are disordered; that stretch reads ANRPTEAMSNPSRAKSRPMDKQALI.

Belongs to the alanine racemase family. The cofactor is pyridoxal 5'-phosphate.

The catalysed reaction is L-alanine = D-alanine. It functions in the pathway amino-acid biosynthesis; D-alanine biosynthesis; D-alanine from L-alanine: step 1/1. Its pathway is cell wall biogenesis; peptidoglycan biosynthesis. In terms of biological role, catalyzes the interconversion of L-alanine and D-alanine. Provides the D-alanine required for cell wall biosynthesis. The chain is Alanine racemase, biosynthetic (alr) from Mesorhizobium japonicum (strain LMG 29417 / CECT 9101 / MAFF 303099) (Mesorhizobium loti (strain MAFF 303099)).